Here is an 853-residue protein sequence, read N- to C-terminus: Dynamin-A (853 aa).

One can recognise a Dynamin-type G domain in the interval 22 to 296 (PLDLPQIVVV…LMFHIRDTLP (275 aa)). The interval 32–39 (GSQSSGKS) is G1 motif. 32-40 (GSQSSGKSS) contributes to the GTP binding site. Residues 58 to 60 (VTR) are G2 motif. The segment at 138 to 141 (DLPG) is G3 motif. Residues 207–210 (TKLD) form a G4 motif region. GTP-binding positions include 207–213 (TKLDLMD) and 238–241 (NRSQ). Positions 237–240 (INRS) are G5 motif. Composition is skewed to low complexity over residues 523–569 (DQYQ…QQNQ) and 590–607 (PAQQ…KGPQ). The segment at 523 to 738 (DQYQQQQQQQ…RYQDDFYGRG (216 aa)) is disordered. Polar residues predominate over residues 610 to 624 (PPNQSKPSSIPQNGP). 2 stretches are compositionally biased toward low complexity: residues 625-635 (NNNNNNNNNNN) and 664-728 (NNSN…SSYN). One can recognise a GED domain in the interval 762-853 (TELIRELLIS…IINEIRDFRN (92 aa)).

This sequence belongs to the TRAFAC class dynamin-like GTPase superfamily. Dynamin/Fzo/YdjA family.

The protein localises to the cytoplasm. Functionally, function in membrane trafficking processes along the endo-lysosomal pathway. This Dictyostelium discoideum (Social amoeba) protein is Dynamin-A (dymA).